Reading from the N-terminus, the 75-residue chain is MTVIRLTRMGRTKRPFYRIVVTDSRKRRDGGWIESIGYYNPMVEPEVIKVDAERLAYWKSVGAKLSDKVASITSK.

Belongs to the bacterial ribosomal protein bS16 family.

The sequence is that of Small ribosomal subunit protein bS16 from Campylobacter jejuni subsp. jejuni serotype O:23/36 (strain 81-176).